The primary structure comprises 755 residues: Metabotropic glutamate receptor-like protein B (755 aa).

Residues 1-23 (MKNLISIILLILIFFNYSKFVKS) form the signal peptide. N-linked (GlcNAc...) asparagine glycans are attached at residues Asn16, Asn183, and Asn273. Topologically, residues 24-385 (KNCKIAVLLS…VDYSSSMKLG (362 aa)) are extracellular. Residues 386–406 (ITITSSICIFLCIISIIIVLV) form a helical membrane-spanning segment. Residues 407–417 (FRTARIIKSAS) lie on the Cytoplasmic side of the membrane. The helical transmembrane segment at 418–438 (PAFLFLILMGCILIFIGCIIF) threads the bilayer. Residues 439-455 (SQSPNEGTCRARVWLLS) are Extracellular-facing. A helical membrane pass occupies residues 456 to 476 (IGYTIFLGSLLVKNWRIWLLF). The Cytoplasmic segment spans residues 477–492 (DNPKLKKRSITNWKLY). A helical transmembrane segment spans residues 493-513 (PWVAGILAADVLILAFWQGLG). The Extracellular segment spans residues 514-541 (NIRSESRIGIDSLTKYQYTNVCSSNDQG). A helical transmembrane segment spans residues 542-562 (SIALYILLVFHGIKLLVACFI). At 563 to 578 (SFKIKVVDIDEFNESK) the chain is on the cytoplasmic side. Residues 579 to 599 (PIASSVYIITFCLFIVIPLMV) traverse the membrane as a helical segment. Residues 600-607 (SPQSVTSQ) are Extracellular-facing. The helical transmembrane segment at 608 to 628 (VTTICVCAIVTTLISIILLFG) threads the bilayer. At 629–755 (SKFYKMITQG…GEVEIDSNNL (127 aa)) the chain is on the cytoplasmic side. 2 disordered regions span residues 656 to 676 (QSLE…EENG) and 691 to 729 (FSSD…NIEE). Positions 694-710 (DTEDDENETQQIDEEKD) are enriched in acidic residues.

In the N-terminal section; belongs to the BMP lipoprotein family. This sequence in the C-terminal section; belongs to the G-protein coupled receptor 3 family. GABA-B receptor subfamily.

It is found in the membrane. The chain is Metabotropic glutamate receptor-like protein B (grlB) from Dictyostelium discoideum (Social amoeba).